The following is a 309-amino-acid chain: 2-dehydropantoate 2-reductase (309 aa).

NADP(+) contacts are provided by residues 7 to 12 (GAGSIG), R31, and K74. Residues 8–10 (AGS), R31, K74, and C84 contribute to the CoA site. NADP(+) is bound by residues N100 and A124. The Proton donor role is filled by K180. Substrate contacts are provided by residues K180, N184, N188, N198, and 247-250 (NYNS). Residue R257 coordinates CoA. NADP(+) is bound at residue E262.

The protein belongs to the ketopantoate reductase family. In terms of assembly, homodimer.

It localises to the cytoplasm. It carries out the reaction (R)-pantoate + NAD(+) = 2-dehydropantoate + NADH + H(+). It catalyses the reaction (R)-pantoate + NADP(+) = 2-dehydropantoate + NADPH + H(+). It functions in the pathway cofactor biosynthesis; coenzyme A biosynthesis. With respect to regulation, regulated by feedback inhibition by coenzyme A (CoA). CoA acts by competing with NAD(P)H. A disulfide bond is formed between CoA and Cys-84, which indicates an irreversible inhibition upon binding of CoA. In terms of biological role, catalyzes the NAD(P)H-dependent reduction of ketopantoate into pantoic acid. Prefers NADH rather than NADPH as the electron donor. This is 2-dehydropantoate 2-reductase from Thermococcus kodakarensis (strain ATCC BAA-918 / JCM 12380 / KOD1) (Pyrococcus kodakaraensis (strain KOD1)).